The following is a 108-amino-acid chain: uncharacterized protein (108 aa).

A signal peptide spans 1–16 (MKKLILIAIMASGLVA). Cys17 carries the N-palmitoyl cysteine lipid modification. Cys17 carries the S-diacylglycerol cysteine lipid modification.

It is found in the cell membrane. This is an uncharacterized protein from Escherichia coli (strain K12).